The chain runs to 458 residues: ATP synthase subunit beta (458 aa).

148-155 lines the ATP pocket; sequence GGAGVGKT.

Belongs to the ATPase alpha/beta chains family. In terms of assembly, F-type ATPases have 2 components, CF(1) - the catalytic core - and CF(0) - the membrane proton channel. CF(1) has five subunits: alpha(3), beta(3), gamma(1), delta(1), epsilon(1). CF(0) has three main subunits: a(1), b(2) and c(9-12). The alpha and beta chains form an alternating ring which encloses part of the gamma chain. CF(1) is attached to CF(0) by a central stalk formed by the gamma and epsilon chains, while a peripheral stalk is formed by the delta and b chains.

It is found in the cell inner membrane. The catalysed reaction is ATP + H2O + 4 H(+)(in) = ADP + phosphate + 5 H(+)(out). Produces ATP from ADP in the presence of a proton gradient across the membrane. The catalytic sites are hosted primarily by the beta subunits. This Pseudomonas putida (strain W619) protein is ATP synthase subunit beta.